We begin with the raw amino-acid sequence, 1235 residues long: ATP-dependent helicase/nuclease subunit A (1235 aa).

One can recognise a UvrD-like helicase ATP-binding domain in the interval 12–482; the sequence is SLWTDDQWKA…IDLSQNFRSR (471 aa). Position 33–40 (33–40) interacts with ATP; sequence AAAGSGKT. The UvrD-like helicase C-terminal domain occupies 509-800; it reads AAELTLGANF…RMMTIHASKG (292 aa).

It belongs to the helicase family. AddA subfamily. In terms of assembly, heterodimer of AddA and AddB/RexB. Mg(2+) is required as a cofactor.

It carries out the reaction Couples ATP hydrolysis with the unwinding of duplex DNA by translocating in the 3'-5' direction.. It catalyses the reaction ATP + H2O = ADP + phosphate + H(+). The heterodimer acts as both an ATP-dependent DNA helicase and an ATP-dependent, dual-direction single-stranded exonuclease. Recognizes the chi site generating a DNA molecule suitable for the initiation of homologous recombination. The AddA nuclease domain is required for chi fragment generation; this subunit has the helicase and 3' -&gt; 5' nuclease activities. This Listeria monocytogenes serovar 1/2a (strain ATCC BAA-679 / EGD-e) protein is ATP-dependent helicase/nuclease subunit A.